The sequence spans 210 residues: Large ribosomal subunit protein uL3 (210 aa).

Residues 125-151 form a disordered region; the sequence is RHGQSRGPMSHGSRYHRRPGSMGPVAP.

Belongs to the universal ribosomal protein uL3 family. In terms of assembly, part of the 50S ribosomal subunit. Forms a cluster with proteins L14 and L19.

One of the primary rRNA binding proteins, it binds directly near the 3'-end of the 23S rRNA, where it nucleates assembly of the 50S subunit. This Bacillus mycoides (strain KBAB4) (Bacillus weihenstephanensis) protein is Large ribosomal subunit protein uL3.